The following is a 382-amino-acid chain: Protein NASP homolog 1 (382 aa).

Residues 1–39 (MDTENIADASDIRVKDASGDSDEKGNGTTTEEETVEQKE) form a disordered region. Over residues 10 to 25 (SDIRVKDASGDSDEKG) the composition is skewed to basic and acidic residues. A TPR 1 repeat occupies 42-75 (LAELLAAGRRALKVNDIDKASDSLSEATELSSEI). Residues 103-112 (QLLKGPGEKE) are compositionally biased toward basic and acidic residues. The segment at 103 to 151 (QLLKGPGEKESGDEEQAGNSDDKTDEENGETEKEDGEESGEEEDDDDDT) is disordered. The segment covering 125–150 (KTDEENGETEKEDGEESGEEEDDDDD) has biased composition (acidic residues). TPR repeat units lie at residues 191–224 (ADVLVLLGEHGISDGKYTQAFEDLDRALNIQRNV) and 233–266 (AQTYILIGNACASDANYDETVQYFGKTKDVLIAR). Residues 264-304 (IARQTELKHELERGVDDKEKKSEFENELKELEEMMPGVEEM) adopt a coiled-coil conformation. The disordered stretch occupies residues 337-382 (PQEAGDQKEANDISSLVRRPAKRAVDAPTDNQAVKKEKEEEGTTSI). The segment covering 369–382 (AVKKEKEEEGTTSI) has biased composition (basic and acidic residues).

This sequence belongs to the NASP family. In terms of assembly, may interact with zinc finger protein tra-4 and histone deacetylase hda-1.

It localises to the nucleus. Promotes normal hermaphrodite (XX) development, in concert with zinc finger protein tra-4 and histone deacetylase hda-1, perhaps as components of a complex. May act redundantly with nasp-2. Involved in innate immune response to B.thuringiensis strain DB27 and S.aureus bacteria. May play a role in the uptake or spreading of dsRNA. The chain is Protein NASP homolog 1 from Caenorhabditis elegans.